Reading from the N-terminus, the 427-residue chain is Vitamin D3 receptor (427 aa).

A DNA-binding region (nuclear receptor) is located at residues 21-96 (PRICGVCGDR…IGMMKEFILT (76 aa)). Zn(2+)-binding residues include Cys24, Cys27, Cys41, Cys44, Cys60, Cys66, Cys76, and Cys79. 2 consecutive NR C4-type zinc fingers follow at residues 24 to 44 (CGVC…CEGC) and 60 to 84 (CPFN…LKRC). The interval 97–126 (DEEVQRKREMILKRKEEEALKDSLRPKLSE) is hinge. The NR LBD domain occupies 127–423 (EQQRIIAILL…LTPLVLEVFG (297 aa)). Tyr143 is a calcitriol binding site. The disordered stretch occupies residues 158-183 (RVNDGGGSHPSRPNSRHTPSFSGDSS). Ser237 is a calcitriol binding site. Positions 246-264 (KMIPGFRDLTSEDQIVLLK) are interaction with coactivator LXXLL motif. Residues Arg274, Ser278, His305, and His397 each coordinate calcitriol. Residues 416-424 (PLVLEVFGN) carry the 9aaTAD motif.

The protein belongs to the nuclear hormone receptor family. NR1 subfamily. As to quaternary structure, homodimer in the absence of bound vitamin D3. Heterodimer with RXRA after vitamin D3 binding. Interacts with MED1, NCOA1, NCOA2, NCOA3 and NCOA6 coactivators, leading to a strong increase of transcription of target genes. Interacts with the corepressor NCOR1. Interacts with SNW1. Interacts with IRX4, the interaction does not affect its transactivation activity. In terms of processing, ubiquitinated by UBR5, leading to its degradation: UBR5 specifically recognizes and binds ligand-bound VDR when it is not associated with coactivators (NCOAs). In presence of NCOAs, the UBR5-degron is not accessible, preventing its ubiquitination and degradation.

Its subcellular location is the nucleus. The protein localises to the cytoplasm. Nuclear receptor for calcitriol, the active form of vitamin D3 which mediates the action of this vitamin on cells. Enters the nucleus upon vitamin D3 binding where it forms heterodimers with the retinoid X receptor/RXR. The VDR-RXR heterodimers bind to specific response elements on DNA and activate the transcription of vitamin D3-responsive target genes. Plays a central role in calcium homeostasis. The protein is Vitamin D3 receptor (VDR) of Saguinus oedipus (Cotton-top tamarin).